Here is a 761-residue protein sequence, read N- to C-terminus: MKKNLFVTKRDGRKEKINLDKIHKVLNWASEGLDDVSVSQVELCSRIQFYNNITTINIHETIIKAAADLISQDTPDYQYMAARLAIFHLRKKAYGQFEPPKLYDHVKKMVDLEKYDENLLKNYSYKEFLQMNSFIDHWRDMNFSYAAVKQLEGKYLIQNRVNGKIYESAQFLYILISACLFSQYPKNVRMNYIHRFYNAISTFKISLPTPIMSGVRTPTRQFSSCVLIECGDSLNSINATTSSIVKYVSQRAGIGVNAGQIRALGSPIRNGEAFHTGCIPFYKHFQSAVKSCSQGGVRGGAATIFYPIWHLEVESLLVLKNNRGIEENRVRHIDYAIQINKLMYQRMLSGDQITLFSPSDVPDLYKAFFSDQKKFKKIYLQYEKNKNIRKKTIKALDLFSLMMQERTSTGRIYVQNVDHCNLHSAFNPELSPIRQSNLCLEITLPTKSLNDVHDTDGEIALCTLSAFNLGKIKSLDDFKELSILSVRALDEILDYQNYPVLAAKKSAISRRSLGIGVINFAYYLAKNKVRYSDGSAHNLTHKTFEAMQYYLLEASCELAKEKGACSLFNHTNYYLGKLPIDTYKKYIDDICNEPLHLDWNLLRSKIKKYGLRNSTLSALMPSETSSQISNATNGIEPPRGFISIKVSKDGILRQVVPEYKKLRLQYELLWDIPNNTGYLQLAGIMQKFIDQSISVNTHYDPARFLNNKIPMKQLLYDLLLSYKLGLKTLYYQNTRDGSEDDQNITSKSITEDICESGSCIL.

One can recognise an ATP-cone domain in the interval 5–95 (LFVTKRDGRK…IFHLRKKAYG (91 aa)). ATP-binding positions include Lys9, 15 to 21 (EKINLDK), Thr55, and Lys91. Residue Thr209 coordinates GDP. Cys225 and Cys462 are joined by a disulfide. DTTP contacts are provided by residues 232–234 (DSL), Arg262, and Arg269. Asn437 is a binding site for GDP. Asn437 functions as the Proton acceptor in the catalytic mechanism. The Cysteine radical intermediate role is filled by Cys439. GDP contacts are provided by residues Glu441 and 623–625 (ETS). The Proton acceptor role is filled by Glu441.

It belongs to the ribonucleoside diphosphate reductase large chain family. Tetramer of two alpha and two beta subunits.

The catalysed reaction is a 2'-deoxyribonucleoside 5'-diphosphate + [thioredoxin]-disulfide + H2O = a ribonucleoside 5'-diphosphate + [thioredoxin]-dithiol. Under complex allosteric control mediated by deoxynucleoside triphosphates and ATP binding to separate specificity and activation sites on the alpha subunit. The type of nucleotide bound at the specificity site determines substrate preference. It seems probable that ATP makes the enzyme reduce CDP and UDP, dGTP favors ADP reduction and dTTP favors GDP reduction. Stimulated by ATP and inhibited by dATP binding to the activity site. Its function is as follows. Provides the precursors necessary for DNA synthesis. Catalyzes the biosynthesis of deoxyribonucleotides from the corresponding ribonucleotides. This is Ribonucleoside-diphosphate reductase subunit alpha (nrdA) from Buchnera aphidicola subsp. Acyrthosiphon pisum (strain APS) (Acyrthosiphon pisum symbiotic bacterium).